The primary structure comprises 416 residues: Adenylosuccinate synthetase (416 aa).

Residues 12 to 18 (GDEGKGK) and 40 to 42 (GHT) each bind GTP. Residue D13 is the Proton acceptor of the active site. The Mg(2+) site is built by D13 and G40. Residues 13 to 16 (DEGK), 38 to 41 (NAGH), T125, R139, Q219, T234, and R298 each bind IMP. Catalysis depends on H41, which acts as the Proton donor. 294 to 300 (TVTGRKR) is a binding site for substrate. Residues R300, 326–328 (KLD), and 404–406 (STS) contribute to the GTP site.

The protein belongs to the adenylosuccinate synthetase family. In terms of assembly, homodimer. Mg(2+) serves as cofactor.

The protein resides in the cytoplasm. It carries out the reaction IMP + L-aspartate + GTP = N(6)-(1,2-dicarboxyethyl)-AMP + GDP + phosphate + 2 H(+). The protein operates within purine metabolism; AMP biosynthesis via de novo pathway; AMP from IMP: step 1/2. Its function is as follows. Plays an important role in the de novo pathway of purine nucleotide biosynthesis. Catalyzes the first committed step in the biosynthesis of AMP from IMP. The protein is Adenylosuccinate synthetase of Aliarcobacter butzleri (strain RM4018) (Arcobacter butzleri).